Here is a 355-residue protein sequence, read N- to C-terminus: Peptide chain release factor 1 (355 aa).

An N5-methylglutamine modification is found at Gln234.

This sequence belongs to the prokaryotic/mitochondrial release factor family. Methylated by PrmC. Methylation increases the termination efficiency of RF1.

It localises to the cytoplasm. Functionally, peptide chain release factor 1 directs the termination of translation in response to the peptide chain termination codons UAG and UAA. The polypeptide is Peptide chain release factor 1 (Metamycoplasma arthritidis (strain 158L3-1) (Mycoplasma arthritidis)).